Reading from the N-terminus, the 98-residue chain is NADH-ubiquinone oxidoreductase chain 4L (98 aa).

Helical transmembrane passes span 1 to 21 (MNLI…GLIF), 26 to 46 (IINI…LFVL), and 61 to 81 (LYIL…VVIL).

Belongs to the complex I subunit 4L family.

The protein resides in the mitochondrion membrane. It catalyses the reaction a ubiquinone + NADH + 5 H(+)(in) = a ubiquinol + NAD(+) + 4 H(+)(out). In terms of biological role, core subunit of the mitochondrial membrane respiratory chain NADH dehydrogenase (Complex I) that is believed to belong to the minimal assembly required for catalysis. Complex I functions in the transfer of electrons from NADH to the respiratory chain. The immediate electron acceptor for the enzyme is believed to be ubiquinone. This Dictyostelium discoideum (Social amoeba) protein is NADH-ubiquinone oxidoreductase chain 4L (nad4L).